The primary structure comprises 475 residues: Bifunctional protein HldE (475 aa).

Positions 1–318 are ribokinase; the sequence is MMQYSLKFNQ…ENAIHHREET (318 aa). 195–198 serves as a coordination point for ATP; it reads NMAE. Residue Asp-264 is part of the active site. The interval 344–475 is cytidylyltransferase; that stretch reads MTNGCFDILH…DVIKKIQAIR (132 aa).

It in the N-terminal section; belongs to the carbohydrate kinase PfkB family. The protein in the C-terminal section; belongs to the cytidylyltransferase family. In terms of assembly, homodimer.

The enzyme catalyses D-glycero-beta-D-manno-heptose 7-phosphate + ATP = D-glycero-beta-D-manno-heptose 1,7-bisphosphate + ADP + H(+). It carries out the reaction D-glycero-beta-D-manno-heptose 1-phosphate + ATP + H(+) = ADP-D-glycero-beta-D-manno-heptose + diphosphate. It functions in the pathway nucleotide-sugar biosynthesis; ADP-L-glycero-beta-D-manno-heptose biosynthesis; ADP-L-glycero-beta-D-manno-heptose from D-glycero-beta-D-manno-heptose 7-phosphate: step 1/4. Its pathway is nucleotide-sugar biosynthesis; ADP-L-glycero-beta-D-manno-heptose biosynthesis; ADP-L-glycero-beta-D-manno-heptose from D-glycero-beta-D-manno-heptose 7-phosphate: step 3/4. The protein operates within bacterial outer membrane biogenesis; LOS core biosynthesis. Functionally, catalyzes the phosphorylation of D-glycero-D-manno-heptose 7-phosphate at the C-1 position to selectively form D-glycero-beta-D-manno-heptose-1,7-bisphosphate. In terms of biological role, catalyzes the ADP transfer from ATP to D-glycero-beta-D-manno-heptose 1-phosphate, yielding ADP-D-glycero-beta-D-manno-heptose. The chain is Bifunctional protein HldE from Haemophilus ducreyi (strain 35000HP / ATCC 700724).